The following is a 658-amino-acid chain: Glycogen debranching enzyme (658 aa).

Asp-335 functions as the Nucleophile in the catalytic mechanism. The active-site Proton donor is Glu-370. Over residues 457–468 (NDANGEGNRDGT) the composition is skewed to basic and acidic residues. Residues 457-478 (NDANGEGNRDGTDSNFSNNHGT) are disordered.

This sequence belongs to the glycosyl hydrolase 13 family.

The enzyme catalyses Hydrolysis of (1-&gt;6)-alpha-D-glucosidic linkages to branches with degrees of polymerization of three or four glucose residues in limit dextrin.. The protein operates within glycan degradation; glycogen degradation. In terms of biological role, removes maltotriose and maltotetraose chains that are attached by 1,6-alpha-linkage to the limit dextrin main chain, generating a debranched limit dextrin. This chain is Glycogen debranching enzyme, found in Pectobacterium carotovorum subsp. carotovorum (strain PC1).